Here is a 104-residue protein sequence, read N- to C-terminus: Secretoglobin family 3A member 1 (104 aa).

An N-terminal signal peptide occupies residues methionine 1–alanine 20.

The protein belongs to the secretoglobin family. UGRP subfamily. Homodimer; disulfide-linked. As to expression, highly expressed in lung and prostate. Also found in mammary gland, spleen, pancreas, testis and liver. Detected throughout the airway epithelium in lung, with highest expression in large airways. Found in lung submucosal glands where it localizes to acinar and ductile cells. Not detected in respiratory bronchioles, alveolar ducts or alveolar epithelium. In mammary gland, specifically localizes to luminal epithelial cells.

It localises to the secreted. In terms of biological role, secreted cytokine-like protein. Inhibits cell growth in vitro. In Homo sapiens (Human), this protein is Secretoglobin family 3A member 1 (SCGB3A1).